The following is a 274-amino-acid chain: MEWVDTGSAMQAPDATFADTREARQAIRAGRWRRHTSGLAPAYVQGNLVILPVDLASDFMRFCQSNPKPCPLLAVGQAGDPALPTLGRDIDIRTDVPAYRVYRDGVLVGEVDDLKALWRDDFVAFVLGCSFSFEHGLIEAGIPLRHVDEGKNVAMYRTNIQTVPAGPFHGPMVVSMRPMKAADAIRAVQITARVPQVHGAPVHIGDPALIGIADITQPDFGDAVRIAPDELPVFWACGVTPQAVVMAAKPALCITHSPGYMLITDMLNRDLPFA.

This sequence belongs to the D-glutamate cyclase family.

The sequence is that of Putative hydro-lyase Veis_4744 from Verminephrobacter eiseniae (strain EF01-2).